A 100-amino-acid polypeptide reads, in one-letter code: Protein RnfH (100 aa).

This sequence belongs to the UPF0125 (RnfH) family.

This chain is Protein RnfH, found in Actinobacillus succinogenes (strain ATCC 55618 / DSM 22257 / CCUG 43843 / 130Z).